The following is a 226-amino-acid chain: Protein AF-9 homolog (226 aa).

One can recognise a YEATS domain in the interval arginine 8 to arginine 169. Residues glutamine 187–asparagine 224 are a coiled coil.

In terms of assembly, component of the SWR1 chromatin-remodeling complex composed of at least ACT1, ARP4, RVB1, RVB2, ARP6, YAF9, VPS71, VPS72, SWC3, SWC4, SWC5, SWC7 and SWR1, and perhaps BDF1. Component of the NuA4 histone acetyltransferase complex composed of at least ACT1, ARP4, YAF9, VID21, SWC4, EAF3, EAF5, EAF6, EAF7, EPL1, ESA1, TRA1 and YNG2. Interacts with SWC4.

The protein localises to the cytoplasm. It is found in the nucleus. Functionally, component of the SWR1 complex which mediates the ATP-dependent exchange of histone H2A for the H2A variant HZT1 leading to transcriptional regulation of selected genes by chromatin remodeling. Component of the NuA4 histone acetyltransferase complex which is involved in transcriptional activation of selected genes principally by acetylation of nucleosomal histones H4 and H2A. The NuA4 complex is also involved in DNA repair. Yaf9 may also be required for viability in conditions in which the structural integrity of the spindle is compromised. The polypeptide is Protein AF-9 homolog (YAF9) (Saccharomyces cerevisiae (strain ATCC 204508 / S288c) (Baker's yeast)).